The chain runs to 95 residues: DASH complex subunit DAD3 (95 aa).

The protein belongs to the DASH complex DAD3 family. In terms of assembly, component of the DASH complex consisting of ASK1, DAD1, DAD2, DAD3, DAD4, DAM1, DUO1, HSK3, SPC19 and SPC34, with a stoichiometry of one copy of each subunit per complex. Multiple DASH complexes oligomerize to form a ring that encircles spindle microtubules and organizes the rod-like NDC80 complexes of the outer kinetochore. DASH complex oligomerization strengthens microtubule attachments. On cytoplasmic microtubules, DASH complexes appear to form patches instead of rings.

The protein resides in the chromosome. The protein localises to the centromere. Its subcellular location is the kinetochore. It localises to the cytoplasm. It is found in the cytoskeleton. The protein resides in the spindle. The protein localises to the nucleus. Its function is as follows. Component of the DASH complex that connects microtubules with kinetochores and couples microtubule depolymerisation to chromosome movement; it is involved in retrieving kinetochores to the spindle poles before their re-orientation on the spindle in early mitosis and allows microtubule depolymerization to pull chromosomes apart and resist detachment during anaphase. Kinetochores, consisting of a centromere-associated inner segment and a microtubule-contacting outer segment, play a crucial role in chromosome segregation by mediating the physical connection between centromeric DNA and microtubules. Kinetochores also serve as an input point for the spindle assembly checkpoint, which delays anaphase until all chromosomes have bioriented on the mitotic spindle. This Chaetomium thermophilum (strain DSM 1495 / CBS 144.50 / IMI 039719) (Thermochaetoides thermophila) protein is DASH complex subunit DAD3.